Reading from the N-terminus, the 360-residue chain is Peptide chain release factor 1 (360 aa).

Gln-233 carries the post-translational modification N5-methylglutamine. The tract at residues 283 to 305 (KLDAERAADRRSQVGSGDRSERI) is disordered.

The protein belongs to the prokaryotic/mitochondrial release factor family. Post-translationally, methylated by PrmC. Methylation increases the termination efficiency of RF1.

It localises to the cytoplasm. Peptide chain release factor 1 directs the termination of translation in response to the peptide chain termination codons UAG and UAA. The sequence is that of Peptide chain release factor 1 from Methylocella silvestris (strain DSM 15510 / CIP 108128 / LMG 27833 / NCIMB 13906 / BL2).